The chain runs to 420 residues: Zinc finger and BTB domain-containing protein 42 (420 aa).

One can recognise a BTB domain in the interval 24-92; sequence CDCTVLVGDA…MYEGRLDLHN (69 aa). Disordered stretches follow at residues 127 to 204 and 222 to 247; these read TRTL…HPPC and VKAEQDSFSEQDSSSPQSADRSPPPV. Residues 227–241 are compositionally biased toward low complexity; sequence DSFSEQDSSSPQSAD. 4 consecutive C2H2-type zinc fingers follow at residues 292-314, 332-354, 360-382, and 388-411; these read CICPLCCKLFPSTHALQLHLSAH, PTCPLCSKTFSCTYTLKRHERTH, YTCVQCGKSFQYSHNLSRHAVVH, and HACRWCERRFTQSGDLYRHVRKFH.

Belongs to the krueppel C2H2-type zinc-finger protein family. ZBTB18 subfamily. In terms of tissue distribution, highly expressed in skeletal muscle and ovary (at protein level). Low expression in brain, lung, spleen, liver and heart (at protein level). Not detected in kidney and intestines (at protein level). Also observed in testis and, at lower levels, in stomach and nervous system.

The protein localises to the cytoplasm. Its subcellular location is the nucleus. It localises to the nucleoplasm. Functionally, transcriptional repressor. Specifically binds DNA and probably acts by recruiting chromatin remodeling multiprotein complexes. This is Zinc finger and BTB domain-containing protein 42 (Zbtb42) from Mus musculus (Mouse).